The primary structure comprises 72 residues: Translation initiation factor IF-1 (72 aa).

Residues 1–72 (MAKEDNIEMQ…SKGRIVFRSR (72 aa)) form the S1-like domain.

It belongs to the IF-1 family. In terms of assembly, component of the 30S ribosomal translation pre-initiation complex which assembles on the 30S ribosome in the order IF-2 and IF-3, IF-1 and N-formylmethionyl-tRNA(fMet); mRNA recruitment can occur at any time during PIC assembly.

It is found in the cytoplasm. In terms of biological role, one of the essential components for the initiation of protein synthesis. Stabilizes the binding of IF-2 and IF-3 on the 30S subunit to which N-formylmethionyl-tRNA(fMet) subsequently binds. Helps modulate mRNA selection, yielding the 30S pre-initiation complex (PIC). Upon addition of the 50S ribosomal subunit IF-1, IF-2 and IF-3 are released leaving the mature 70S translation initiation complex. This is Translation initiation factor IF-1 from Klebsiella pneumoniae subsp. pneumoniae (strain ATCC 700721 / MGH 78578).